The sequence spans 546 residues: Medium-chain-fatty-acid--CoA ligase (546 aa).

T185 is a binding site for Mg(2+). The ATP site is built by W235 and T329. E330 serves as a coordination point for Mg(2+). ATP is bound by residues D417, K434, K438, and W443.

It belongs to the ATP-dependent AMP-binding enzyme family.

It is found in the cytoplasm. It catalyses the reaction a medium-chain fatty acid + ATP + CoA = a medium-chain fatty acyl-CoA + AMP + diphosphate. The protein operates within lipid metabolism; fatty acid metabolism. The chain is Medium-chain-fatty-acid--CoA ligase from Ectopseudomonas oleovorans (Pseudomonas oleovorans).